Consider the following 518-residue polypeptide: U-box domain-containing protein 57 (518 aa).

Residues 86 to 142 (EEVRKVHILEEEIVTLKHQADTYLVQKEKAVTAYDQLKHERDNAVQQVNELRDQSTH) are a coiled coil. One can recognise a Protein kinase domain in the interval 159-409 (FKNAREVGDT…RPDLLNEVWI (251 aa)). One can recognise a U-box domain in the interval 434-508 (SVPAAFICPI…HGYLQQQQPN (75 aa)).

The catalysed reaction is S-ubiquitinyl-[E2 ubiquitin-conjugating enzyme]-L-cysteine + [acceptor protein]-L-lysine = [E2 ubiquitin-conjugating enzyme]-L-cysteine + N(6)-ubiquitinyl-[acceptor protein]-L-lysine.. It functions in the pathway protein modification; protein ubiquitination. Possesses E3 ubiquitin-protein ligase in vitro. May be involved in cell death signaling. In Oryza sativa subsp. japonica (Rice), this protein is U-box domain-containing protein 57 (PUB57).